A 94-amino-acid chain; its full sequence is Aspartyl/glutamyl-tRNA(Asn/Gln) amidotransferase subunit C (94 aa).

Belongs to the GatC family. In terms of assembly, heterotrimer of A, B and C subunits.

The catalysed reaction is L-glutamyl-tRNA(Gln) + L-glutamine + ATP + H2O = L-glutaminyl-tRNA(Gln) + L-glutamate + ADP + phosphate + H(+). The enzyme catalyses L-aspartyl-tRNA(Asn) + L-glutamine + ATP + H2O = L-asparaginyl-tRNA(Asn) + L-glutamate + ADP + phosphate + 2 H(+). Functionally, allows the formation of correctly charged Asn-tRNA(Asn) or Gln-tRNA(Gln) through the transamidation of misacylated Asp-tRNA(Asn) or Glu-tRNA(Gln) in organisms which lack either or both of asparaginyl-tRNA or glutaminyl-tRNA synthetases. The reaction takes place in the presence of glutamine and ATP through an activated phospho-Asp-tRNA(Asn) or phospho-Glu-tRNA(Gln). The chain is Aspartyl/glutamyl-tRNA(Asn/Gln) amidotransferase subunit C from Caldicellulosiruptor saccharolyticus (strain ATCC 43494 / DSM 8903 / Tp8T 6331).